The primary structure comprises 703 residues: DnaJ homolog subfamily C member 14 (703 aa).

2 disordered regions span residues 1–150 and 164–229; these read MAQK…DGSS and EDEE…RKRS. Positions 17–28 are enriched in low complexity; the sequence is SGGSSLITSGSS. A compositionally biased stretch (pro residues) spans 75-84; the sequence is HGPPRGPGPP. Composition is skewed to acidic residues over residues 89–102 and 164–176; these read YPDE…ESGV and EDEE…DDEE. The segment covering 193-202 has biased composition (basic residues); that stretch reads PPSRRQRHRF. Positions 203–218 are enriched in basic and acidic residues; that stretch reads LTKEDVRDSGRRDPKA. A compositionally biased stretch (basic residues) spans 219 to 228; the sequence is PGRHRLARKR. A run of 3 helical transmembrane segments spans residues 254-274, 305-325, and 327-347; these read WWLI…GYLI, VMFQ…IRLL, and VVGA…QLGW. The 65-residue stretch at 444–508 folds into the J domain; it reads NPFHVLGVEA…ERRKEYEMKR (65 aa). Disordered stretches follow at residues 622–643 and 659–703; these read FGSR…PPAD and MSNG…PFQR. Positions 673 to 684 are enriched in polar residues; the sequence is GTTSTSRPNSSV. The span at 691–703 shows a compositional bias: basic residues; sequence PKRRKKVRRPFQR.

In terms of assembly, interacts with the FxxxFxxxF motif of DRD1 via its C-terminal domain. As to expression, detected in heart, brain, lung, liver, skeletal muscle, kidney and testis.

It is found in the endoplasmic reticulum membrane. Functionally, regulates the export of target proteins, such as DRD1, from the endoplasmic reticulum to the cell surface. This Rattus norvegicus (Rat) protein is DnaJ homolog subfamily C member 14 (Dnajc14).